The primary structure comprises 329 residues: Biotin--protein ligase 2 (329 aa).

Positions I67–M251 constitute a BPL/LPL catalytic domain. Residues S84 to T85, Q107, R111 to R113, and K182 each bind biotin.

The protein belongs to the biotin--protein ligase family. Highly expressed in seeds. Expressed in roots, leaves, stems, flowers and siliques.

The protein localises to the cytoplasm. Seems to have no or limited implication in biotin-dependent carboxylase biotinylation in planta. This chain is Biotin--protein ligase 2 (HCS2), found in Arabidopsis thaliana (Mouse-ear cress).